The primary structure comprises 308 residues: Acetaldehyde dehydrogenase 2 (308 aa).

12–15 is an NAD(+) binding site; sequence SGNI. C127 acts as the Acyl-thioester intermediate in catalysis. NAD(+) contacts are provided by residues 162-170 and N281; that span reads SAGPGTRAN.

The protein belongs to the acetaldehyde dehydrogenase family.

The enzyme catalyses acetaldehyde + NAD(+) + CoA = acetyl-CoA + NADH + H(+). The sequence is that of Acetaldehyde dehydrogenase 2 from Mycobacterium marinum (strain ATCC BAA-535 / M).